The chain runs to 486 residues: Hexokinase-2 (486 aa).

At Ser15 the chain carries Phosphoserine. Residues 21–469 enclose the Hexokinase domain; that stretch reads KELMQQIENF…SGAGAAVIAA (449 aa). At Thr38 the chain carries Phosphothreonine. The segment at 75 to 209 is hexokinase small subdomain; it reads TGKESGDFLA…NIPIEVVALI (135 aa). ATP contacts are provided by residues 86-91 and Lys111; that span reads DLGGTN. At Ser158 the chain carries Phosphoserine. Substrate contacts are provided by residues Ser158, 175–176, 210–211, and Asn237; these read TK and ND. Positions 210 to 458 are hexokinase large subdomain; sequence NDTTGTLVAS…YPIKIVPAED (249 aa). Residue Ser245 is modified to Phosphoserine. Glu269 contacts substrate. The residue at position 272 (Ser272) is a Phosphoserine. Glu302 is a binding site for substrate. Residues 307 to 308, 344 to 348, and 419 to 423 each bind ATP; these read GY, TSYPA, and SVYNR.

Belongs to the hexokinase family. In terms of assembly, homodimer.

It carries out the reaction a D-hexose + ATP = a D-hexose 6-phosphate + ADP + H(+). The enzyme catalyses D-fructose + ATP = D-fructose 6-phosphate + ADP + H(+). The catalysed reaction is D-glucose + ATP = D-glucose 6-phosphate + ADP + H(+). It participates in carbohydrate metabolism; hexose metabolism. The protein operates within carbohydrate degradation; glycolysis; D-glyceraldehyde 3-phosphate and glycerone phosphate from D-glucose: step 1/4. Its activity is regulated as follows. Subject to allosteric control. Substrate inhibition by ATP. In terms of biological role, catalyzes the phosphorylation of hexose, such as D-glucose and D-fructose, to hexose 6-phosphate (D-glucose 6-phosphate and D-fructose 6-phosphate, respectively). Mediates the initial step of glycolysis by catalyzing phosphorylation of D-glucose to D-glucose 6-phosphate. In Saccharomyces cerevisiae (strain ATCC 204508 / S288c) (Baker's yeast), this protein is Hexokinase-2 (HXK2).